A 499-amino-acid polypeptide reads, in one-letter code: Cytosol aminopeptidase (499 aa).

Mn(2+) contacts are provided by Lys267 and Asp272. The active site involves Lys279. Mn(2+) is bound by residues Asp290, Asp349, and Glu351. Residue Arg353 is part of the active site.

It belongs to the peptidase M17 family. Mn(2+) is required as a cofactor.

The protein resides in the cytoplasm. It catalyses the reaction Release of an N-terminal amino acid, Xaa-|-Yaa-, in which Xaa is preferably Leu, but may be other amino acids including Pro although not Arg or Lys, and Yaa may be Pro. Amino acid amides and methyl esters are also readily hydrolyzed, but rates on arylamides are exceedingly low.. It carries out the reaction Release of an N-terminal amino acid, preferentially leucine, but not glutamic or aspartic acids.. Its function is as follows. Presumably involved in the processing and regular turnover of intracellular proteins. Catalyzes the removal of unsubstituted N-terminal amino acids from various peptides. The polypeptide is Cytosol aminopeptidase (pepA) (Buchnera aphidicola subsp. Acyrthosiphon pisum (strain APS) (Acyrthosiphon pisum symbiotic bacterium)).